We begin with the raw amino-acid sequence, 201 residues long: Putative lipoprotein LppC (201 aa).

The N-terminal stretch at 1 to 23 (MTSTLHRTPLATAGLALVVALGG) is a signal peptide. C24 carries N-palmitoyl cysteine lipidation. C24 is lipidated: S-diacylglycerol cysteine. 3 prevents bacterial uptake by a human macrophage-like cell line regions span residues 77–96 (GANVAPPLTWSSPAGAAELA), 97–116 (LVVDDPDAVGGLYVHWIVTG), and 117–136 (IAPGSGSTADGQTPAGGHSV). The segment at 122–141 (GSTADGQTPAGGHSVPNSGG) is disordered.

Belongs to the UPF0098 family.

Its subcellular location is the cell membrane. The protein resides in the cell surface. Its function is as follows. Probably involved in bacterial recognition and uptake by its host (human). The sequence is that of Putative lipoprotein LppC from Mycobacterium tuberculosis (strain ATCC 25618 / H37Rv).